Here is a 392-residue protein sequence, read N- to C-terminus: Formate-dependent phosphoribosylglycinamide formyltransferase (392 aa).

N(1)-(5-phospho-beta-D-ribosyl)glycinamide-binding positions include 20–21 (EL) and glutamate 80. Residues arginine 112, lysine 153, 158–163 (SSGKGQ), 193–196 (EGFV), and glutamate 201 each bind ATP. One can recognise an ATP-grasp domain in the interval 117–306 (RLAAEELGLP…EFALHVRAIL (190 aa)). Mg(2+)-binding residues include glutamate 265 and glutamate 277. Residues aspartate 284, lysine 355, and 362-363 (RR) each bind N(1)-(5-phospho-beta-D-ribosyl)glycinamide.

The protein belongs to the PurK/PurT family. As to quaternary structure, homodimer.

The enzyme catalyses N(1)-(5-phospho-beta-D-ribosyl)glycinamide + formate + ATP = N(2)-formyl-N(1)-(5-phospho-beta-D-ribosyl)glycinamide + ADP + phosphate + H(+). Its pathway is purine metabolism; IMP biosynthesis via de novo pathway; N(2)-formyl-N(1)-(5-phospho-D-ribosyl)glycinamide from N(1)-(5-phospho-D-ribosyl)glycinamide (formate route): step 1/1. Functionally, involved in the de novo purine biosynthesis. Catalyzes the transfer of formate to 5-phospho-ribosyl-glycinamide (GAR), producing 5-phospho-ribosyl-N-formylglycinamide (FGAR). Formate is provided by PurU via hydrolysis of 10-formyl-tetrahydrofolate. The polypeptide is Formate-dependent phosphoribosylglycinamide formyltransferase (Aeromonas salmonicida (strain A449)).